A 389-amino-acid chain; its full sequence is Phospho-N-acetylmuramoyl-pentapeptide-transferase (389 aa).

A run of 10 helical transmembrane segments spans residues 25–45 (RAVMATITALLIGLVCGPAVI), 73–93 (TMGGVLILLGIAVATLLWADL), 97–117 (FIWIVMLVTFGFGVIGWVDDY), 135–155 (FWQSVIGLFAAVYLAFSVSEA), 190–210 (ISYPLGVWGFIVLTYLVIVGA), 222–242 (GLVIMPVVLVGASLGVFAYVM), 259–279 (AGELLIFCSAMGGAGLAFLWF), 287–307 (FMGDVGALALGGALGTVAVIV), 311–331 (IVLFIMGGIFVAETLSVMLQV), and 366–386 (QVVVRFWIITLMLCLFGLSTL).

This sequence belongs to the glycosyltransferase 4 family. MraY subfamily. Mg(2+) serves as cofactor.

The protein localises to the cell inner membrane. It catalyses the reaction UDP-N-acetyl-alpha-D-muramoyl-L-alanyl-gamma-D-glutamyl-meso-2,6-diaminopimeloyl-D-alanyl-D-alanine + di-trans,octa-cis-undecaprenyl phosphate = di-trans,octa-cis-undecaprenyl diphospho-N-acetyl-alpha-D-muramoyl-L-alanyl-D-glutamyl-meso-2,6-diaminopimeloyl-D-alanyl-D-alanine + UMP. Its pathway is cell wall biogenesis; peptidoglycan biosynthesis. Functionally, catalyzes the initial step of the lipid cycle reactions in the biosynthesis of the cell wall peptidoglycan: transfers peptidoglycan precursor phospho-MurNAc-pentapeptide from UDP-MurNAc-pentapeptide onto the lipid carrier undecaprenyl phosphate, yielding undecaprenyl-pyrophosphoryl-MurNAc-pentapeptide, known as lipid I. The sequence is that of Phospho-N-acetylmuramoyl-pentapeptide-transferase from Paraburkholderia xenovorans (strain LB400).